Consider the following 266-residue polypeptide: MVDSMDMANSSQNTFRRRTMATSEMREFLSTKDAEPNNFGMQTIPESPTPSTPTRRMSIGDSTRIYDWEEPRFNIQGFVVDYFTYRIAQNGLDWYDAPALPDGVQKEHEMMRSLGTIFEKRHMEMFENFSEQLLAVPKISFSLYQEVVQTVGNSSNTPCPMSYGRLIGLISFGGMVAAKMMESAELQGQVRNLLMYTSLFIKTRIRQSWKEHNRSWADFMKLGQQMKEDYEKEKDAEEGKRLKSWSIIGASVIAVIVCGRIIFSFK.

Positions 1–58 (MVDSMDMANSSQNTFRRRTMATSEMREFLSTKDAEPNNFGMQTIPESPTPSTPTRRMS) are disordered. Over residues 24-35 (EMREFLSTKDAE) the composition is skewed to basic and acidic residues. The short motif at 75–94 (IQGFVVDYFTYRIAQNGLDW) is the BH4 element. Positions 156–174 (NTPCPMSYGRLIGLISFGG) match the BH1 motif. The short motif at 208–223 (SWKEHNRSWADFMKLG) is the BH2 element.

This sequence belongs to the Bcl-2 family. In terms of assembly, interacts with asymmetric homodimer ced-4; the interaction sequesters ced-4. Interacts with egl-1; the interaction results in ced-4 release. Interacts with dre-1; the interaction inhibits ced-9 activity, either directly or indirectly. Interacts with dct-1. May form a complex composed of ced-9, ced-4 and mac-1.

It localises to the perikaryon. The protein resides in the synapse. The protein localises to the endomembrane system. It is found in the mitochondrion membrane. Its function is as follows. Plays a major role in programmed cell death (PCD, apoptosis). egl-1 binds to and directly inhibits the activity of ced-9, releasing the cell death activator ced-4 from a ced-9/ced-4 containing protein complex and allowing ced-4 to activate the cell-killing caspase ced-3. During larval development, required for the elimination of transient presynaptic components downstream of egl-1 and upstream of ced-4 and ced-3 apoptotic pathway. The protein is Apoptosis regulator ced-9 (ced-9) of Caenorhabditis briggsae.